Consider the following 201-residue polypeptide: Orotate phosphoribosyltransferase (201 aa).

113-121 (EDIITTGKS) provides a ligand contact to 5-phospho-alpha-D-ribose 1-diphosphate. Orotate-binding residues include Thr-117 and Arg-145.

It belongs to the purine/pyrimidine phosphoribosyltransferase family. PyrE subfamily. In terms of assembly, homodimer. Mg(2+) is required as a cofactor.

The enzyme catalyses orotidine 5'-phosphate + diphosphate = orotate + 5-phospho-alpha-D-ribose 1-diphosphate. Its pathway is pyrimidine metabolism; UMP biosynthesis via de novo pathway; UMP from orotate: step 1/2. Its function is as follows. Catalyzes the transfer of a ribosyl phosphate group from 5-phosphoribose 1-diphosphate to orotate, leading to the formation of orotidine monophosphate (OMP). The protein is Orotate phosphoribosyltransferase of Helicobacter pylori (strain P12).